The sequence spans 212 residues: Probable dual specificity protein phosphatase DDB_G0269404 (212 aa).

One can recognise a Tyrosine-protein phosphatase domain in the interval 30 to 169; that stretch reads FDAQEVIPNL…LINYEATILK (140 aa). Residue cysteine 113 is the Phosphocysteine intermediate of the active site.

It belongs to the protein-tyrosine phosphatase family. Non-receptor class dual specificity subfamily.

The enzyme catalyses O-phospho-L-tyrosyl-[protein] + H2O = L-tyrosyl-[protein] + phosphate. It carries out the reaction O-phospho-L-seryl-[protein] + H2O = L-seryl-[protein] + phosphate. The catalysed reaction is O-phospho-L-threonyl-[protein] + H2O = L-threonyl-[protein] + phosphate. In terms of biological role, has a dual specificity toward Ser/Thr and Tyr-containing proteins. This chain is Probable dual specificity protein phosphatase DDB_G0269404, found in Dictyostelium discoideum (Social amoeba).